Reading from the N-terminus, the 612-residue chain is Glutamine--fructose-6-phosphate aminotransferase [isomerizing] (612 aa).

The active-site Nucleophile; for GATase activity is the cysteine 2. Positions 2-220 (CGIVGAIRAH…DGDIALLASD (219 aa)) constitute a Glutamine amidotransferase type-2 domain. 2 SIS domains span residues 288–428 (AKSV…VRGL) and 461–602 (WAQQ…VDKP). The active-site For Fru-6P isomerization activity is the lysine 607.

As to quaternary structure, homodimer.

It localises to the cytoplasm. The catalysed reaction is D-fructose 6-phosphate + L-glutamine = D-glucosamine 6-phosphate + L-glutamate. Functionally, catalyzes the first step in hexosamine metabolism, converting fructose-6P into glucosamine-6P using glutamine as a nitrogen source. The polypeptide is Glutamine--fructose-6-phosphate aminotransferase [isomerizing] (Neisseria meningitidis serogroup B (strain ATCC BAA-335 / MC58)).